We begin with the raw amino-acid sequence, 481 residues long: Cobyric acid synthase (481 aa).

Residues 249-436 (GLHIVCLRLS…LHGMFRDDAF (188 aa)) enclose the GATase cobBQ-type domain. C331 acts as the Nucleophile in catalysis. H428 is an active-site residue.

Belongs to the CobB/CobQ family. CobQ subfamily.

It participates in cofactor biosynthesis; adenosylcobalamin biosynthesis. Catalyzes amidations at positions B, D, E, and G on adenosylcobyrinic A,C-diamide. NH(2) groups are provided by glutamine, and one molecule of ATP is hydrogenolyzed for each amidation. The polypeptide is Cobyric acid synthase (Jannaschia sp. (strain CCS1)).